A 674-amino-acid chain; its full sequence is Tripartite terminase subunit 3 (674 aa).

Positions 212–219 (VPRRHGKT) match the Walker A motif motif. Positions 305–310 (LLLVDE) match the Walker B motif motif. Glu310 (for ATPase activity) is an active-site residue. Active-site for nuclease activity residues include Asp463, Glu534, and Asp651.

The protein belongs to the herpesviridae TRM3 protein family. In terms of assembly, interacts with the terminase subunits TRM1 and TRM2. Interacts with portal protein.

The protein resides in the host nucleus. Functionally, component of the molecular motor that translocates viral genomic DNA in empty capsid during DNA packaging. Forms a tripartite terminase complex together with TRM1 and TRM2 in the host cytoplasm. Once the complex reaches the host nucleus, it interacts with the capsid portal vertex. This portal forms a ring in which genomic DNA is translocated into the capsid. TRM3 carries an RNase H-like nuclease activity that plays an important role for the cleavage of concatemeric viral DNA into unit length genomes. In Homo sapiens (Human), this protein is Tripartite terminase subunit 3.